The chain runs to 126 residues: Scygonadin (126 aa).

A signal peptide spans Met1–Ala24.

As to expression, expressed in the ejaculatory ducts of mature males. Not detected in the ejaculatory ducts of immature males. Not detected in hepatopancreas, female reproductive tract, eyes, exoskeleton, subcuticular epithelia, heart, gills, stomach, muscle and hemocytes.

Its subcellular location is the secreted. Has antibacterial activity against the Gram-positive bacterium M.luteus with an IC(90) of 125ug/ml. Has weak antibacterial activity against the Gram-negative bacterium A.hydrophila. The chain is Scygonadin from Scylla serrata (Mud crab).